Reading from the N-terminus, the 449-residue chain is Elongation factor 1-alpha (449 aa).

One can recognise a tr-type G domain in the interval 5-230 (KVHINIVVIG…DQIQEPKRPS (226 aa)). The segment at 14–21 (GHVDSGKS) is G1. A GTP-binding site is contributed by 14–21 (GHVDSGKS). K55 carries the N6,N6-dimethyllysine modification. The segment at 70–74 (GITID) is G2. Position 79 is an N6,N6,N6-trimethyllysine (K79). The G3 stretch occupies residues 91-94 (DAPG). GTP contacts are provided by residues 91-95 (DAPGH) and 153-156 (NKMD). The G4 stretch occupies residues 153–156 (NKMD). Position 187 is an N6,N6,N6-trimethyllysine (K187). Positions 194-196 (SGF) are G5. Position 261 is an N6-methyllysine (K261). Residue E289 is modified to 5-glutamyl glycerylphosphorylethanolamine. K306 is subject to N6,N6,N6-trimethyllysine. E362 bears the 5-glutamyl glycerylphosphorylethanolamine mark. K396 is subject to N6,N6,N6-trimethyllysine.

Belongs to the TRAFAC class translation factor GTPase superfamily. Classic translation factor GTPase family. EF-Tu/EF-1A subfamily.

Its subcellular location is the cytoplasm. This protein promotes the GTP-dependent binding of aminoacyl-tRNA to the A-site of ribosomes during protein biosynthesis. The polypeptide is Elongation factor 1-alpha (EF1) (Manihot esculenta (Cassava)).